We begin with the raw amino-acid sequence, 494 residues long: Flavin-containing monooxygenase ustF2 (494 aa).

The N-terminal stretch at 1-21 is a signal peptide; sequence MANPQTTRVAVVGAGISGVLA. 13-18 contacts FAD; sequence GAGISG. The interval 73–93 is disordered; that stretch reads EPSYPAMKPSKADPPATNEQE. 250–255 is an NADP(+) binding site; sequence GGGVSS. A glycan (N-linked (GlcNAc...) asparagine) is linked at Asn459.

Belongs to the FMO family.

Its pathway is mycotoxin biosynthesis. Functionally, flavin-containing monooxygenase; part of the gene cluster that mediates the biosynthesis of the secondary metabolite ustiloxin B, an antimitotic tetrapeptide. First, ustA is processed by the subtilisin-like endoprotease Kex2 that is outside the ustiloxin B gene cluster, at the C-terminal side of Arg-Lys, after transfer to Golgi apparatus through the endoplasmic reticulum (ER). Cleavage by KEX2 generates 16 peptides YAIG-I to YAIG-XVI. To process the precursor peptide further, at least two peptidases are necessary to cleave the N-terminal and C-terminal sides of the Tyr-Ala-Ile-Gly core peptide which serves as backbone for the synthesis of ustiloxin B, through cyclization and modification of the tyrosine with a non-protein coding amino acid, norvaline. One of the two peptidases must be the serine peptidase ustP; and the other pepdidase is probably ustH. Macrocyclization of the core peptide derived from ustA requires the tyrosinase ustQ, as well as the homologous oxidases ustYa and ustYb, and leads to the production of the first cyclization product N-desmethylustiloxin F. For the formation of N-desmethylustiloxin F, three oxidation steps are required, hydroxylation at the benzylic position, hydroxylation at either the aromatic ring of Tyr or beta-position of Ile, and oxidative cyclization. UstQ may catalyze the oxidation of a phenol moiety, whereas the ustYa and ustYb are most likely responsible for the remaining two-step oxidations. N-desmethylustiloxin F is then methylated by ustM to yield ustiloxin F which in turn substrate of the cytochrome P450 monooxygenase ustC which catalyzes the formation of S-deoxyustiloxin H. The flavoprotein monooxygenases ustF1 and ustF2 then participate in the modification of the side chain of S-deoxyustiloxin H, leading to the synthesis of an oxime intermediate, via ustiloxin H. Finally, carboxylative dehydration performed by the cysteine desulfurase-like protein ustD yields ustiloxin B. The chain is Flavin-containing monooxygenase ustF2 from Aspergillus flavus (strain ATCC 200026 / FGSC A1120 / IAM 13836 / NRRL 3357 / JCM 12722 / SRRC 167).